The primary structure comprises 330 residues: Probable ADP,ATP carrier protein At5g56450 (330 aa).

The span at 1–10 (MCISKEDEED) shows a compositional bias: acidic residues. Residues 1-22 (MCISKEDEEDPSRNRRNQSPLS) are disordered. 6 helical membrane passes run 27-61 (LKHFQKDLLAGAVMGGVVHTIVAPIERAKLLLQTQ), 103-127 (GSSVLRYYPSVALNFSLKDLYRSIL), 137-171 (IFSGALANFMAGSAAGCTALIVVYPLDIAHTRLAA), 203-230 (GLPASLHGVIIHRGLYFGGFDTVKEIFS), 236-270 (ELALWKRWGLAQAVTTSAGLASYPLDTVRRRIMMQ), and 300-325 (GALSNMFRSTGSAAILVFYDEVKRFL). 3 Solcar repeats span residues 28–126 (KHFQ…YRSI), 139–228 (SGAL…VKEI), and 241–324 (KRWG…VKRF). ADP-binding residues include arginine 108 and lysine 120. Arginine 264 is a binding site for ADP. The Substrate recognition signature appears at 264 to 269 (RRRIMM).

This sequence belongs to the mitochondrial carrier (TC 2.A.29) family. Monomer.

The protein resides in the membrane. The enzyme catalyses ADP(in) + ATP(out) = ADP(out) + ATP(in). Its function is as follows. ADP:ATP antiporter that catalyzes the exchange of ADP and ATP across the membrane. In Arabidopsis thaliana (Mouse-ear cress), this protein is Probable ADP,ATP carrier protein At5g56450.